An 83-amino-acid chain; its full sequence is Large ribosomal subunit protein bL31 (83 aa).

Belongs to the bacterial ribosomal protein bL31 family. Type A subfamily. In terms of assembly, part of the 50S ribosomal subunit.

Its function is as follows. Binds the 23S rRNA. The sequence is that of Large ribosomal subunit protein bL31 from Synechococcus sp. (strain CC9605).